The chain runs to 1446 residues: MALDQTALFQKLLEQIALPADVAHYPGFKTGQVEQVIVHETSKRWTFKLHFDNVLPFAVYTAFEEHLEAAFQAIAAVSIEISTDAKELDGGVLAAYWEYVVNHSGIQSSLLHELCAKETPYIEGRKVLLVVENDIVKTFFINQAQTTIQAGYKRLGFPNFAIQPLIDESASQKSIEDFQAKRAVQDAERAQAAAEAIKKNEALKEKRKTEGKPVDGPIVMGRGINPAEPVRQMISITEEERSIVIEGFIFDKEVRVLRSGRQLLILKMTDYSSSFTVKKFSRDASDESLFAAIDKGMWFKVRGSVQEDNFMRDLTVNANDLVEVSHPKREDTATDGKRIEMHLHTNMSQMDATNPIGDYVKQAAKWGQPAIAVTDHYNLQAFPDAYAAGKKNGVKILYGVEVNLVNDGTPVVYNLRDQVLESAEYVIFDVETTGLSAVYDSIIELAAVKMRDGEVVASFDEFIDPERPLSAFTTQLTSITNEMVHGAKKEAEVLAMFKEFTGDAVLAGHNVSFDMGFLNAGYERNDIDLIDNPVIDTLELSRMLHPEYKNHKLDSLTKRYKINLEHHHRANADAESTGYLLYKLEKEAAENYDMVNVNQLNDRVGVGEFYKQARPAHAVLMAQTQAGLKNLFKLVSASMTEYYYRTPRLPKSKLDALREGILVGSACSNGEVFEAMMQKGYNEALDRAKYYDYIEVMPKAVYAPLLERELVRDNRALEEIIRNLVKVGEKLNKPVVATGDAHYLNPEDAIYRKILIHSMGGANPLNRSKLPDVHFRSTDEMLTAFDFLGPELAQELVVANPQKIADQIDEIVPVKDKLYTPKMAGAEDEIQTLTMNRAHELYGAELPEIVEARLKKELKSIIGNGFSVIYLISQKLVYKSGKDGYLVGSRGSVGSSLVATMTGITEVNPLPPHYRCSNCHYSEFFTKGEVGSGYDLADKDCPECGTPLDKDGHDIPFETFLGFHGDKVPDIDLNFSGDYQPVAHNYTKVLFGENNVFRAGTIGTVADKTAYGYVKAYERDTEQTFRGAEVDRLAKGSTGVKRTTGQHPAGIIVVPDYMDIYDFTPIQFPADDQDAAWKTTHFDFHSIHDNILKLDILGHDDPTMIRMLQDLSGIDPKSIPTDDPGVMALFSGTDSLGVTPEQINSKMGTLGVPEFGTRFVRGMLEETHPTTFSELLQISGLSHGTDVWLGNAEELINKGVVTLKDVIGCRDNIMMDLIHWGMDDSMSFNIMERVRKGKGIPDDWQQAMRDNENVPDWYIDSCLKIKYMFPKAHATAYILMALRIAYFKVYFPIIYYCAYFSVRASDFDLVAMAQGKEGVKARMKEITDKGMEASTKEKNLLTVLEIANECLERGITIKMVDIEKSDSSDFLIQDDHTLLAPFRAVPSLGDNVAKQIVSAREEKPFLSKEDLSNRGKVSKTLIEYLTENNVLNDLPDENQLSLFDMM.

Residues 425–581 (YVIFDVETTG…ADAESTGYLL (157 aa)) form the Exonuclease domain.

The protein belongs to the DNA polymerase type-C family. PolC subfamily.

It is found in the cytoplasm. It carries out the reaction DNA(n) + a 2'-deoxyribonucleoside 5'-triphosphate = DNA(n+1) + diphosphate. Functionally, required for replicative DNA synthesis. This DNA polymerase also exhibits 3' to 5' exonuclease activity. This chain is DNA polymerase III PolC-type, found in Latilactobacillus sakei subsp. sakei (strain 23K) (Lactobacillus sakei subsp. sakei).